We begin with the raw amino-acid sequence, 187 residues long: MATTADFKSGMCLNLEGRYYYIVEFLHVKPGKGPAFVRTKLKSVTTGRVIEKTFNAGVKIDEVRIERRLYLFLYQDDMIYHFMQNETFEQVFVERNNIVGVDFLKEGDMVEIVVHADSETILFAEIPIHAVLTVIYTEPGIKGDTATNATKLATIETGASIRVPLFINKGDKIKVDTRNGSYVERVK.

The protein belongs to the elongation factor P family.

Its subcellular location is the cytoplasm. Its pathway is protein biosynthesis; polypeptide chain elongation. In terms of biological role, involved in peptide bond synthesis. Stimulates efficient translation and peptide-bond synthesis on native or reconstituted 70S ribosomes in vitro. Probably functions indirectly by altering the affinity of the ribosome for aminoacyl-tRNA, thus increasing their reactivity as acceptors for peptidyl transferase. The protein is Elongation factor P of Azobacteroides pseudotrichonymphae genomovar. CFP2.